A 473-amino-acid chain; its full sequence is Zinc finger and BTB domain-containing protein 9 (473 aa).

In terms of domain architecture, BTB spans 48-112 (CDVSLLVQGR…IYSGRLRLPL (65 aa)). Positions 177–279 (QTPVQSSAST…LELPAPPALP (103 aa)) are disordered. Over residues 182–196 (SSASTESPASTESPV) the composition is skewed to low complexity. A compositionally biased stretch (acidic residues) spans 211 to 226 (VEEEEEEEEDDDDEDQ). Over residues 227-239 (GSATLSQTPQPQR) the composition is skewed to polar residues. Residue Lys286 forms a Glycyl lysine isopeptide (Lys-Gly) (interchain with G-Cter in SUMO1); alternate linkage. A Glycyl lysine isopeptide (Lys-Gly) (interchain with G-Cter in SUMO2); alternate cross-link involves residue Lys286. Residues Lys293 and Lys307 each participate in a glycyl lysine isopeptide (Lys-Gly) (interchain with G-Cter in SUMO2) cross-link. The tract at residues 293-376 (KEEISGSGTQ…VHGPVKLGGT (84 aa)) is disordered. The segment covering 355–364 (SGGGGPGGAG) has biased composition (gly residues). Residue Lys382 forms a Glycyl lysine isopeptide (Lys-Gly) (interchain with G-Cter in SUMO2) linkage. The segment at 411–433 (FGCGICNKRFKLKHHLTEHMKTH) adopts a C2H2-type 1 zinc-finger fold. The C2H2-type 2; atypical zinc-finger motif lies at 438–460 (HACPHCGRRFRVHACFLRHRDLC).

The protein resides in the nucleus. In terms of biological role, may be involved in transcriptional regulation. In Homo sapiens (Human), this protein is Zinc finger and BTB domain-containing protein 9 (ZBTB9).